Here is a 465-residue protein sequence, read N- to C-terminus: MNVTSLFSFTSPAVKRLLGWKQGDEEEKWAEKAVDALVKKLKKKKGAMEELEKALSCPGQPSNCVTIPRSLDGRLQVSHRKGLPHVIYCRVWRWPDLQSHHELKPLECCEFPFGSKQKEVCINPYHYKRVESPVLPPVLVPRHSEYNPQHSLLAQFRNLGQNEPHMPLNATFPDSFQQPNSHPFPHSPNSSYPNSPGSSSSTYPHSPTSSDPGSPFQMPADTPPPAYLPPEDPMTQDGSQPMDTNMMAPSLPSEINRGDVQAVAYEEPKHWCSIVYYELNNRVGEAFHASSTSVLVDGFTDPSNNKNRFCLGLLSNVNRNSTIENTRRHIGKGVHLYYVGGEVYAECLSDSSIFVQSRNCNYHHGFHPTTVCKIPSGCSLKIFNNQEFAQLLAQSVNHGFETVYELTKMCTIRMSFVKGWGAEYHRQDVTSTPCWIEIHLHGPLQWLDKVLTQMGSPHNPISSVS.

Residue M1 is modified to N-acetylmethionine. In terms of domain architecture, MH1 spans 12 to 136; it reads PAVKRLLGWK…YKRVESPVLP (125 aa). Zn(2+)-binding residues include C64, C109, C121, and H126. The tract at residues 162–249 is disordered; the sequence is NEPHMPLNAT…QPMDTNMMAP (88 aa). Positions 179 to 210 are enriched in low complexity; sequence PNSHPFPHSPNSSYPNSPGSSSSTYPHSPTSS. A compositionally biased stretch (pro residues) spans 221 to 232; sequence DTPPPAYLPPED. The MH2 domain maps to 271–465; that stretch reads WCSIVYYELN…SPHNPISSVS (195 aa). T322 carries the phosphothreonine; by MINK1, TNIK and MAP4K4 modification. The segment at 418–428 is L3 loop; that stretch reads KGWGAEYHRQD. 2 positions are modified to phosphoserine: S463 and S465.

Belongs to the dwarfin/SMAD family. As to quaternary structure, found in a complex with SMAD4 and YY1. Interacts with HGS, NANOG and ZCCHC12. Upon C-terminus phosphorylation: forms trimers with another SMAD1 and the co-SMAD SMAD4. Interacts with PEBP2-alpha subunit, CREB-binding protein (CBP), p300, SMURF1, SMURF2, USP15 and HOXC8. Associates with ZNF423 or ZNF521 in response to BMP2 leading to activate transcription of BMP target genes. Interacts with SKOR1. Interacts (via MH2 domain) with LEMD3. Binding to LEMD3 results in at least a partial reduction of receptor-mediated phosphorylation. Forms a ternary complex with PSMB4 and OAZ1 before PSMB4 is incorporated into the 20S proteasome. Interacts (via MH2 domain) with FAM83G (via MH2 domain); in a SMAD4-independent manner. Interacts with ZC3H3. Interacts with TMEM119. Interacts (via MH1 and MH2 domains) with ZNF8. Interacts with RANBP3L; the interaction increases when SMAD1 is not phosphorylated and mediates SMAD1 nuclear export. Interacts with EGR1; this interaction inhibits SMAD1 dephosphorylation. Interacts with SMAD6. Interacts with YAP1. Interacts with MTMR4; negatively regulates BMP signaling through SMAD1 dephosphorylation and retention in endosomes. Post-translationally, phosphorylation of the C-terminal SVS motif by BMP type 1 receptor kinase activates SMAD1 by promoting dissociation from the receptor and trimerization with SMAD4. Phosphorylation by ERK2 MAP kinase in response to EGF or HGF prevents SMAD1 nuclear accumulation and transcriptional activity in response to BMP. Dephosphorylation, probably by PPM1A, induces its export from the nucleus to the cytoplasm. Dephosphorylation is inhibited by association with EGR1. Phosphorylation by CDK8/9 creates binding sites for YAP1, and subsequent phosphorylation by GSK3 switches off YAP1 binding and adds binding sites for SMURF1. Ubiquitinated by SMAD-specific E3 ubiquitin ligase SMURF1, leading to its degradation. Monoubiquitinated, leading to prevent DNA-binding. Deubiquitination by USP15 alleviates inhibition and promotes activation of TGF-beta target genes. Dephosphorylation, probably by PPM1A, induces its export from the nucleus to the cytoplasm. Phospho-SMAD1 is ubiquitinated by CHIP leading to disruption of the SMAD1-SMAD4 complex.

The protein localises to the cytoplasm. It is found in the nucleus. Its function is as follows. Transcriptional modulator that plays a role in various cellular processes, including embryonic development, cell differentiation, and tissue homeostasis. Upon BMP ligand binding to their receptors at the cell surface, is phosphorylated by activated type I BMP receptors (BMPRIs) and associates with SMAD4 to form an heteromeric complex which translocates into the nucleus acting as transcription factor. In turn, the hetero-trimeric complex recognizes cis-regulatory elements containing Smad Binding Elements (SBEs) to modulate the outcome of the signaling network. SMAD1/OAZ1/PSMB4 complex mediates the degradation of the CREBBP/EP300 repressor SNIP1. Positively regulates BMP4-induced expression of odontogenic development regulator MSX1 following IPO7-mediated nuclear import. The sequence is that of Mothers against decapentaplegic homolog 1 (SMAD1) from Bos taurus (Bovine).